A 353-amino-acid polypeptide reads, in one-letter code: Uroporphyrinogen decarboxylase (353 aa).

Substrate is bound by residues 27–31 (RQAGR), Phe-46, Asp-76, Tyr-152, Ser-207, and His-321.

The protein belongs to the uroporphyrinogen decarboxylase family. As to quaternary structure, homodimer.

Its subcellular location is the cytoplasm. It carries out the reaction uroporphyrinogen III + 4 H(+) = coproporphyrinogen III + 4 CO2. The protein operates within porphyrin-containing compound metabolism; protoporphyrin-IX biosynthesis; coproporphyrinogen-III from 5-aminolevulinate: step 4/4. In terms of biological role, catalyzes the decarboxylation of four acetate groups of uroporphyrinogen-III to yield coproporphyrinogen-III. In Listeria monocytogenes serotype 4b (strain F2365), this protein is Uroporphyrinogen decarboxylase.